Consider the following 85-residue polypeptide: uncharacterized protein (85 aa).

This is an uncharacterized protein from Caenorhabditis elegans.